We begin with the raw amino-acid sequence, 135 residues long: Interleukin-4 (135 aa).

The first 24 residues, 1–24 (MGLTSQLIPALVCLLVCTSHFVHG), serve as a signal peptide directing secretion. 3 disulfide bridges follow: Cys27–Cys135, Cys48–Cys85, and Cys70–Cys105. 2 N-linked (GlcNAc...) asparagine glycosylation sites follow: Asn62 and Asn96.

It belongs to the IL-4/IL-13 family.

The protein resides in the secreted. In terms of biological role, participates in at least several B-cell activation processes as well as of other cell types. It is a costimulator of DNA-synthesis. It induces the expression of class II MHC molecules on resting B-cells. It enhances both secretion and cell surface expression of IgE and IgG1. It also regulates the expression of the low affinity Fc receptor for IgE (CD23) on both lymphocytes and monocytes. Positively regulates IL31RA expression in macrophages. Stimulates autophagy in dendritic cells by interfering with mTORC1 signaling and through the induction of RUFY4. In Capra hircus (Goat), this protein is Interleukin-4 (IL4).